The following is a 124-amino-acid chain: UPF0102 protein MSMEG_2508/MSMEI_2448 (124 aa).

Belongs to the UPF0102 family.

The polypeptide is UPF0102 protein MSMEG_2508/MSMEI_2448 (Mycolicibacterium smegmatis (strain ATCC 700084 / mc(2)155) (Mycobacterium smegmatis)).